A 35-amino-acid chain; its full sequence is 3-hydroxyisobutyrate dehydrogenase (35 aa).

4–33 is a binding site for NAD(+); that stretch reads TPVGFIGLGNMGNPMAKNLMKHGYPLIIYD. Residue Lys24 is modified to N6-acetyllysine; alternate. At Lys24 the chain carries N6-succinyllysine; alternate.

The protein belongs to the HIBADH-related family. 3-hydroxyisobutyrate dehydrogenase subfamily. As to quaternary structure, homodimer.

The protein localises to the mitochondrion. The enzyme catalyses 3-hydroxy-2-methylpropanoate + NAD(+) = 2-methyl-3-oxopropanoate + NADH + H(+). The protein operates within amino-acid degradation; L-valine degradation. The protein is 3-hydroxyisobutyrate dehydrogenase (HIBADH) of Oryctolagus cuniculus (Rabbit).